Consider the following 188-residue polypeptide: ATP synthase subunit b (188 aa).

The helical transmembrane segment at 7–26 (TAAAGAMTLFFASMAYASGD) threads the bilayer.

It belongs to the ATPase B chain family. As to quaternary structure, F-type ATPases have 2 components, F(1) - the catalytic core - and F(0) - the membrane proton channel. F(1) has five subunits: alpha(3), beta(3), gamma(1), delta(1), epsilon(1). F(0) has three main subunits: a(1), b(2) and c(10-14). The alpha and beta chains form an alternating ring which encloses part of the gamma chain. F(1) is attached to F(0) by a central stalk formed by the gamma and epsilon chains, while a peripheral stalk is formed by the delta and b chains.

It is found in the cell inner membrane. In terms of biological role, f(1)F(0) ATP synthase produces ATP from ADP in the presence of a proton or sodium gradient. F-type ATPases consist of two structural domains, F(1) containing the extramembraneous catalytic core and F(0) containing the membrane proton channel, linked together by a central stalk and a peripheral stalk. During catalysis, ATP synthesis in the catalytic domain of F(1) is coupled via a rotary mechanism of the central stalk subunits to proton translocation. Its function is as follows. Component of the F(0) channel, it forms part of the peripheral stalk, linking F(1) to F(0). This chain is ATP synthase subunit b, found in Nitratidesulfovibrio vulgaris (strain DP4) (Desulfovibrio vulgaris).